The following is a 1305-amino-acid chain: Rho GTPase-activating protein 33 (1305 aa).

Residues 1–64 (MLQAQKQSDP…KPGKRLSAPR (64 aa)) form a disordered region. At serine 32 the chain carries Phosphoserine. A PX; atypical domain is found at 83–192 (FGHIQLLLSP…CGPVLTWMEL (110 aa)). The region spanning 210–272 (PAVAAAHVVK…PSECVELFTE (63 aa)) is the SH3 domain. In terms of domain architecture, Rho-GAP spans 339 to 534 (CDLGEHLSNS…FLLTHVEVLF (196 aa)). Disordered stretches follow at residues 575–818 (RTQG…LDIS), 864–1054 (LSDT…SFFS), and 1115–1305 (SYSG…RSYC). Residues 582-595 (TPTEPTTPKTPASP) show a composition bias toward low complexity. Serine 594 carries the post-translational modification Phosphoserine. Residues 596–608 (VERRKRERAEKQR) show a composition bias toward basic and acidic residues. Residues 646 to 669 (SGSRPDTVTLRSAKSEESLSSQAS) show a composition bias toward polar residues. Phosphoserine is present on serine 660. The segment covering 694–733 (APAGSCESLSSSSSSSSSSSSSSSSESSAGGLGPLSGSPS) has biased composition (low complexity). The residue at position 749 (serine 749) is a Phosphoserine. The span at 774–786 (PGDPAPPASPAPP) shows a compositional bias: pro residues. The segment covering 787-798 (ASASAFPPRATP) has biased composition (low complexity). The span at 864–873 (LSDTCQQEIS) shows a compositional bias: polar residues. The segment covering 895–915 (LLPPPLPLLRPGGAPPPPPKN) has biased composition (pro residues). Positions 916–940 (PARLMALALAERAQQVAEQQSQQEQ) are enriched in low complexity. 3 stretches are compositionally biased toward polar residues: residues 992–1020 (RQQS…SQVS), 1039–1054 (SPCS…SFFS), and 1115–1125 (SYSGPSRSWSP). A Phosphotyrosine modification is found at tyrosine 1188. Residues 1194–1208 (GPRGPSPASSSSSSP) show a composition bias toward low complexity. An Omega-N-methylarginine modification is found at arginine 1263. The segment covering 1292–1305 (SWSLHSEGQTRSYC) has biased composition (polar residues).

Belongs to the PX domain-containing GAP family. In terms of assembly, specifically interacts with CDC42 and RHOQ/TC10 through its Rho-GAP domain. Interacts with NEK6. Highly expressed in brain and testis. Also expressed in white adipose tissue (WAT) and muscle at a low level.

It localises to the cell membrane. May be involved in several stages of intracellular trafficking. Could play an important role in the regulation of glucose transport by insulin. May act as a downstream effector of RHOQ/TC10 in the regulation of insulin-stimulated glucose transport. The protein is Rho GTPase-activating protein 33 (Arhgap33) of Mus musculus (Mouse).